We begin with the raw amino-acid sequence, 95 residues long: Aspartyl/glutamyl-tRNA(Asn/Gln) amidotransferase subunit C (95 aa).

This sequence belongs to the GatC family. Heterotrimer of A, B and C subunits.

The catalysed reaction is L-glutamyl-tRNA(Gln) + L-glutamine + ATP + H2O = L-glutaminyl-tRNA(Gln) + L-glutamate + ADP + phosphate + H(+). It catalyses the reaction L-aspartyl-tRNA(Asn) + L-glutamine + ATP + H2O = L-asparaginyl-tRNA(Asn) + L-glutamate + ADP + phosphate + 2 H(+). In terms of biological role, allows the formation of correctly charged Asn-tRNA(Asn) or Gln-tRNA(Gln) through the transamidation of misacylated Asp-tRNA(Asn) or Glu-tRNA(Gln) in organisms which lack either or both of asparaginyl-tRNA or glutaminyl-tRNA synthetases. The reaction takes place in the presence of glutamine and ATP through an activated phospho-Asp-tRNA(Asn) or phospho-Glu-tRNA(Gln). This Alkalilimnicola ehrlichii (strain ATCC BAA-1101 / DSM 17681 / MLHE-1) protein is Aspartyl/glutamyl-tRNA(Asn/Gln) amidotransferase subunit C.